The following is a 263-amino-acid chain: Type III pantothenate kinase (263 aa).

9 to 16 (DIGNTSIK) is a binding site for ATP. Substrate is bound by residues Tyr103 and 110-113 (GADR). The active-site Proton acceptor is the Asp112. Asp134 is a binding site for K(+). Thr137 is a binding site for ATP. Substrate is bound at residue Thr190.

The protein belongs to the type III pantothenate kinase family. As to quaternary structure, homodimer. It depends on NH4(+) as a cofactor. Requires K(+) as cofactor.

It is found in the cytoplasm. The catalysed reaction is (R)-pantothenate + ATP = (R)-4'-phosphopantothenate + ADP + H(+). It participates in cofactor biosynthesis; coenzyme A biosynthesis; CoA from (R)-pantothenate: step 1/5. In terms of biological role, catalyzes the phosphorylation of pantothenate (Pan), the first step in CoA biosynthesis. In Desulfovibrio desulfuricans (strain ATCC 27774 / DSM 6949 / MB), this protein is Type III pantothenate kinase.